Here is a 425-residue protein sequence, read N- to C-terminus: Serine--tRNA ligase (425 aa).

232–234 (TSE) is an L-serine binding site. ATP is bound by residues 263–265 (RRE) and Val279. Glu286 is a binding site for L-serine. 350 to 353 (EVVS) is an ATP binding site. Residue Thr387 participates in L-serine binding.

It belongs to the class-II aminoacyl-tRNA synthetase family. Type-1 seryl-tRNA synthetase subfamily. As to quaternary structure, homodimer. The tRNA molecule binds across the dimer.

The protein resides in the cytoplasm. It catalyses the reaction tRNA(Ser) + L-serine + ATP = L-seryl-tRNA(Ser) + AMP + diphosphate + H(+). It carries out the reaction tRNA(Sec) + L-serine + ATP = L-seryl-tRNA(Sec) + AMP + diphosphate + H(+). It participates in aminoacyl-tRNA biosynthesis; selenocysteinyl-tRNA(Sec) biosynthesis; L-seryl-tRNA(Sec) from L-serine and tRNA(Sec): step 1/1. Functionally, catalyzes the attachment of serine to tRNA(Ser). Is also able to aminoacylate tRNA(Sec) with serine, to form the misacylated tRNA L-seryl-tRNA(Sec), which will be further converted into selenocysteinyl-tRNA(Sec). The polypeptide is Serine--tRNA ligase (Methanocella arvoryzae (strain DSM 22066 / NBRC 105507 / MRE50)).